The chain runs to 436 residues: ATP-dependent RNA helicase RhlB (436 aa).

The Q motif motif lies at 9–37 (QKFADLDLLPQVIEGLEKKGFDYCTPIQA). The Helicase ATP-binding domain occupies 40–219 (LPVLLTGQDI…FEHMHNPEHV (180 aa)). An ATP-binding site is contributed by 53 to 60 (AQTGTGKT). The DEAD box signature appears at 165-168 (DEAD). A Helicase C-terminal domain is found at 245-390 (ALLQTLIEEE…MSDYDASALL (146 aa)). Positions 398-436 (RLRTRNPQQRRSNNNGPRNGNRKPNQNRRPRQPRHNKEA) are disordered. Low complexity predominate over residues 402–421 (RNPQQRRSNNNGPRNGNRKP). Residues 422–436 (NQNRRPRQPRHNKEA) are compositionally biased toward basic residues.

This sequence belongs to the DEAD box helicase family. RhlB subfamily. Component of the RNA degradosome, which is a multiprotein complex involved in RNA processing and mRNA degradation.

The protein resides in the cytoplasm. The enzyme catalyses ATP + H2O = ADP + phosphate + H(+). In terms of biological role, DEAD-box RNA helicase involved in RNA degradation. Has RNA-dependent ATPase activity and unwinds double-stranded RNA. This chain is ATP-dependent RNA helicase RhlB, found in Vibrio atlanticus (strain LGP32) (Vibrio splendidus (strain Mel32)).